Reading from the N-terminus, the 398-residue chain is Lysophosphatidylserine lipase ABHD12 (398 aa).

Residues 1 to 15 (MRKRTEPVTLEHERC) show a composition bias toward basic and acidic residues. The disordered stretch occupies residues 1–24 (MRKRTEPVTLEHERCAASGSSSSG). The Cytoplasmic portion of the chain corresponds to 1-74 (MRKRTEPVTL…RKSLWFRLRK (74 aa)). Residues 75–95 (ILLCVLGFYIAIPFLVKLCPG) traverse the membrane as a helical segment. Topologically, residues 96–398 (IQAKLIFLNF…LGKSEPERQH (303 aa)) are extracellular. Asparagine 123 carries N-linked (GlcNAc...) asparagine glycosylation. Serine 246 serves as the catalytic Nucleophile. Catalysis depends on charge relay system residues aspartate 333 and histidine 372.

This sequence belongs to the serine esterase family. Post-translationally, glycosylated.

It localises to the endoplasmic reticulum membrane. The protein resides in the mitochondrion. The enzyme catalyses 1-(9Z-octadecenoyl)-sn-glycero-3-phospho-L-serine + H2O = sn-glycero-3-phospho-L-serine + (9Z)-octadecenoate + H(+). The catalysed reaction is 1-(9Z-octadecenoyl)-sn-glycero-3-phospho-(1'-sn-glycerol) + H2O = sn-glycero-3-phospho-(1'-sn-glycerol) + (9Z)-octadecenoate + H(+). It catalyses the reaction 1-(9Z-octadecenoyl)-sn-glycero-3-phospho-(1D-myo-inositol) + H2O = sn-glycero-3-phospho-1D-myo-inositol + (9Z)-octadecenoate + H(+). It carries out the reaction 1-(9Z-octadecenoyl)-sn-glycero-3-phosphoethanolamine + H2O = sn-glycero-3-phosphoethanolamine + (9Z)-octadecenoate + H(+). The enzyme catalyses 1-(9Z-octadecenoyl)-sn-glycero-3-phosphocholine + H2O = 1-(9Z-octadecenoyl)-sn-glycerol + phosphocholine + H(+). The catalysed reaction is 2-(9Z-octadecenoyl)-glycerol + H2O = glycerol + (9Z)-octadecenoate + H(+). It catalyses the reaction 1-hexadecanoyl-sn-glycero-3-phospho-L-serine + H2O = sn-glycero-3-phospho-L-serine + hexadecanoate + H(+). It carries out the reaction 2-(5Z,8Z,11Z,14Z-eicosatetraenoyl)-glycerol + H2O = glycerol + (5Z,8Z,11Z,14Z)-eicosatetraenoate + H(+). The enzyme catalyses Hydrolyzes glycerol monoesters of long-chain fatty acids.. The catalysed reaction is 1-decanoylglycerol + H2O = decanoate + glycerol + H(+). It catalyses the reaction 1-dodecanoylglycerol + H2O = dodecanoate + glycerol + H(+). It carries out the reaction 1-tetradecanoylglycerol + H2O = tetradecanoate + glycerol + H(+). The enzyme catalyses 2-hexadecanoylglycerol + H2O = glycerol + hexadecanoate + H(+). The catalysed reaction is 1-(9Z-octadecenoyl)-glycerol + H2O = glycerol + (9Z)-octadecenoate + H(+). It catalyses the reaction 2-(9Z,12Z-octadecadienoyl)-glycerol + H2O = (9Z,12Z)-octadecadienoate + glycerol + H(+). It carries out the reaction 1-(5Z,8Z,11Z,14Z-eicosatetraenoyl)-glycerol + H2O = glycerol + (5Z,8Z,11Z,14Z)-eicosatetraenoate + H(+). The enzyme catalyses 1-(9Z,12Z-octadecadienoyl)-glycerol + H2O = (9Z,12Z)-octadecadienoate + glycerol + H(+). The catalysed reaction is 1-hexadecanoylglycerol + H2O = glycerol + hexadecanoate + H(+). It catalyses the reaction 1-octadecanoylglycerol + H2O = octadecanoate + glycerol + H(+). It carries out the reaction 1-octadecanoyl-2-(9,10-epoxyoctadecanoyl)-sn-glycero-3-phospho-L-serine + H2O = 9,10-epoxyoctadecanoate + 1-octadecanoyl-sn-glycero-3-phosphoserine + H(+). The enzyme catalyses 1-octadecanoyl-2-(10-hydroxyoctadecanoyl)-sn-glycero-3-phospho-L-serine + H2O = 1-octadecanoyl-sn-glycero-3-phosphoserine + 10-hydroxyoctadecanoate + H(+). The catalysed reaction is 1-hexadecanoyl-2-(10-hydroxyoctadecanoyl)-sn-glycero-3-phospho-L-serine + H2O = 10-hydroxyoctadecanoate + 1-hexadecanoyl-sn-glycero-3-phospho-L-serine + H(+). Selectively inhibited by DO264 (N-3-pyridyl-N'-(1-[3-chloro-4-{2-chloro-4-(trifluoromethoxy)phenoxy}pyridine-2-yl]piperidin-4-yl)thiourea). Functionally, lysophosphatidylserine (LPS) lipase that mediates the hydrolysis of lysophosphatidylserine, a class of signaling lipids that regulates immunological and neurological processes. Represents a major lysophosphatidylserine lipase in the brain, thereby playing a key role in the central nervous system. Also able to hydrolyze oxidized phosphatidylserine; oxidized phosphatidylserine is produced in response to severe inflammatory stress and constitutes a proapoptotic 'eat me' signal. Also has monoacylglycerol (MAG) lipase activity: hydrolyzes 2-arachidonoylglycerol (2-AG), thereby acting as a regulator of endocannabinoid signaling pathways. Has a strong preference for very-long-chain lipid substrates; substrate specificity is likely due to improved catalysis and not improved substrate binding. In Mus musculus (Mouse), this protein is Lysophosphatidylserine lipase ABHD12.